Here is a 1037-residue protein sequence, read N- to C-terminus: Importin-8 (1037 aa).

One can recognise an Importin N-terminal domain in the interval 22-102 (AENELNQSYK…RDNIVEGIIR (81 aa)). Positions 886 to 895 (DRSKAEKADM) are enriched in basic and acidic residues. The disordered stretch occupies residues 886 to 934 (DRSKAEKADMEENEEISSDEEETNVTAQAMQSNNGRGEDEEEEDDDWDE). Positions 896–908 (EENEEISSDEEET) are enriched in acidic residues. Ser902 and Ser903 each carry phosphoserine. A compositionally biased stretch (polar residues) spans 909–920 (NVTAQAMQSNNG). A compositionally biased stretch (acidic residues) spans 923–934 (EDEEEEDDDWDE).

Belongs to the importin beta family. In terms of assembly, forms a heterodimer with KPNB1. Interacts with SRP19. Interacts with RPL23A. Binds directly to nuclear pore complexes. Interacts with LRPPRC; the interaction occurs when LRPPRC is in its RNA-free form and promotes import of LRPPRC to the nucleus to allow for EIF4E-mediated export of mRNAS from the nucleus to the cytoplasm.

The protein resides in the cytoplasm. Its subcellular location is the nucleus. Involved in nuclear protein import, either by acting as autonomous nuclear transport receptor or as an adapter-like protein in association with the importin-beta subunit KPNB1. Acting autonomously, may serve as receptor for nuclear localization signals (NLS) and promote translocation of import substrates through the nuclear pore complex (NPC) by an energy requiring, Ran-dependent mechanism. At the nucleoplasmic side of the NPC, Ran binds to importin, the importin/substrate complex dissociates and importin is re-exported from the nucleus to the cytoplasm where GTP hydrolysis releases Ran. The directionality of nuclear import is thought to be conferred by an asymmetric distribution of the GTP- and GDP-bound forms of Ran between the cytoplasm and nucleus. In vitro mediates the nuclear import of the signal recognition particle protein SRP19. May also be involved in cytoplasm-to-nucleus shuttling of a broad spectrum of other cargos, including Argonaute-microRNAs complexes, the JUN protein, RELA/NF-kappa-B p65 subunit, the translation initiation factor EIF4E and a set of receptor-activated mothers against decapentaplegic homolog (SMAD) transcription factors that play a critical role downstream of the large family of transforming growth factor beta and bone morphogenetic protein (BMP) cytokines. This chain is Importin-8 (IPO8), found in Homo sapiens (Human).